Consider the following 313-residue polypeptide: Formimidoylglutamase (313 aa).

The Mn(2+) site is built by His-130, Asp-155, His-157, Asp-159, Asp-241, and Asp-243.

It belongs to the arginase family. Requires Mn(2+) as cofactor.

The enzyme catalyses N-formimidoyl-L-glutamate + H2O = formamide + L-glutamate. It participates in amino-acid degradation; L-histidine degradation into L-glutamate; L-glutamate from N-formimidoyl-L-glutamate (hydrolase route): step 1/1. Catalyzes the conversion of N-formimidoyl-L-glutamate to L-glutamate and formamide. The protein is Formimidoylglutamase of Salmonella newport (strain SL254).